We begin with the raw amino-acid sequence, 400 residues long: Elongation factor Tu (400 aa).

One can recognise a tr-type G domain in the interval 10-208; the sequence is KPHVNVGTIG…AMDNYIPEPQ (199 aa). The G1 stretch occupies residues 19–26; that stretch reads GHIDHGKS. Residue 19–26 coordinates GTP; that stretch reads GHIDHGKS. Residue S26 participates in Mg(2+) binding. Residues 60-64 are G2; sequence GITIN. A G3 region spans residues 81-84; that stretch reads DCPG. GTP is bound by residues 81–85 and 136–139; these read DCPGH and NKTD. The segment at 136–139 is G4; that stretch reads NKTD. A G5 region spans residues 174-176; that stretch reads SAL.

It belongs to the TRAFAC class translation factor GTPase superfamily. Classic translation factor GTPase family. EF-Tu/EF-1A subfamily. In terms of assembly, monomer.

Its subcellular location is the cytoplasm. It carries out the reaction GTP + H2O = GDP + phosphate + H(+). Functionally, GTP hydrolase that promotes the GTP-dependent binding of aminoacyl-tRNA to the A-site of ribosomes during protein biosynthesis. The polypeptide is Elongation factor Tu (Thermotoga petrophila (strain ATCC BAA-488 / DSM 13995 / JCM 10881 / RKU-1)).